The primary structure comprises 154 residues: 3-hydroxyacyl-[acyl-carrier-protein] dehydratase FabZ (154 aa).

The active site involves His54.

It belongs to the thioester dehydratase family. FabZ subfamily.

The protein localises to the cytoplasm. It catalyses the reaction a (3R)-hydroxyacyl-[ACP] = a (2E)-enoyl-[ACP] + H2O. Involved in unsaturated fatty acids biosynthesis. Catalyzes the dehydration of short chain beta-hydroxyacyl-ACPs and long chain saturated and unsaturated beta-hydroxyacyl-ACPs. The chain is 3-hydroxyacyl-[acyl-carrier-protein] dehydratase FabZ from Shewanella oneidensis (strain ATCC 700550 / JCM 31522 / CIP 106686 / LMG 19005 / NCIMB 14063 / MR-1).